The chain runs to 956 residues: Pollen-specific leucine-rich repeat extensin-like protein 1 (956 aa).

Positions M1–A30 are cleaved as a signal peptide. LRR repeat units follow at residues L39 to Y59, E60 to K84, V119 to L143, T144 to K166, T168 to W191, P192 to K215, L217 to S238, A240 to M261, K262 to L285, N287 to L309, and A310 to K332. N-linked (GlcNAc...) asparagine glycosylation is found at N273 and N287. Residue N338 is glycosylated (N-linked (GlcNAc...) asparagine). Residues P355–K377 are compositionally biased toward polar residues. Disordered regions lie at residues P355 to K380 and C397 to Y956. Residues S408–A417 are compositionally biased toward pro residues. Basic and acidic residues-rich tracts occupy residues E431–P441 and T452–P534. The segment covering Q640 to T830 has biased composition (pro residues). The segment at P651–Y956 is contains the Ser-Pro(4) repeats. Residues P837–Q852 show a composition bias toward polar residues. Residues S947 to Y956 show a composition bias toward pro residues.

Post-translationally, hydroxylated on proline residues in the S-P-P-P-P repeat. O-glycosylated on hydroxyprolines. In terms of tissue distribution, expressed in flowers, stamen, pollen, and pollinated carpels.

Its subcellular location is the secreted. The protein resides in the cell wall. Its function is as follows. Modulates cell morphogenesis by regulating cell wall formation and assembly, and/or growth polarization. The protein is Pollen-specific leucine-rich repeat extensin-like protein 1 (PEX1) of Arabidopsis thaliana (Mouse-ear cress).